Reading from the N-terminus, the 843-residue chain is MVGVTSCEEEILEYGRGYSEDVDTIREREYPQLKDTTYLDHAGTTLYAKSLIESFSRELTSNLFGNPHSLSTSSQLSTQRVDDVRLRALRFFKADPEEFDLVFVANATAAIKLVADGMRDSTRQGFWYGYHVDAHTSLVGVRELAEKGGRCFTSDDEVEDWISRLCDVRSESLKLFAYPAQSNMNGRRLPFSWCKKIRDQGETTGGNVYTLLDAASLVSTSPLDLSDASAAPDFTVLSFYKIFGFPDLGALIVRKSAGQIFEHRRYFGGGTVDMVLTRGLQWHAKKQSSIHDRLEDGTLPFHNIIALDSAFATHERLFGSMQNISSHTRFLAKRLYDRLNALRHFNGQRVCELYKSPRSDYNQPSTQGPIIAFNLRNSQGSWIGKSEVERLAATKNIQIRSGSLCNPGGTSGSLGWTGADLLQQFSAGLRCGDDHDVMDGRPTGVLRLSLGPMTNLEDINTFVELVEEFYVEKAATVDSLVAPVHSVPLQQPRFYIESLSLYPIKSCGPFKVPDGRRWEIRREGLAWDREWCLIHQGTGAALNQKKYPRMALIRPSIDLDRNVLRVTCGEPGSTDQKLLEVSLLRENTELATTSLCQRTSKASTVCGDQVTVQAYTSPPVAQFFSDFLGVPCTLARFPPHSSTRYASPRKAPGAWKQYLRKFVMPGSFPQDPSPPPAEKHPILLSNESPILLISRSSVNYLNENIKANQKKIRTGTSKAVAADVFRANIVVAESLADSPKMEQPYIEDQWEALKIGPGELRFDVLGSCQRCSMVCIDQFTGVRRDEPFSTLAKTRKINNKIVFGRHCSLSASEVTQDQHDNAERWTLMVGDIVIPSYAHDYTL.

N6-(pyridoxal phosphate)lysine is present on K241. The active site involves C405. In terms of domain architecture, MOSC spans 657–836 (QYLRKFVMPG…LMVGDIVIPS (180 aa)).

Belongs to the class-V pyridoxal-phosphate-dependent aminotransferase family. MOCOS subfamily. Pyridoxal 5'-phosphate is required as a cofactor.

It carries out the reaction Mo-molybdopterin + L-cysteine + AH2 = thio-Mo-molybdopterin + L-alanine + A + H2O. Functionally, sulfurates the molybdenum cofactor. Sulfation of molybdenum is essential for xanthine dehydrogenase (XDH) and aldehyde oxidase (ADO) enzymes in which molybdenum cofactor is liganded by 1 oxygen and 1 sulfur atom in active form. In Aspergillus fumigatus (strain CBS 144.89 / FGSC A1163 / CEA10) (Neosartorya fumigata), this protein is Molybdenum cofactor sulfurase.